A 206-amino-acid polypeptide reads, in one-letter code: Triafestin-1 (206 aa).

The N-terminal stretch at 1–18 is a signal peptide; that stretch reads MKTILAVIFFGILAFAFA. N-linked (GlcNAc...) asparagine glycosylation occurs at Asn-55.

This sequence belongs to the calycin superfamily. Triabin family. Interacts with host coagulation factor XII (F12) (inactive and activated) (via amino acids 1-77). Interacts with host high molecular weight kininogen (KNG1) (via amino acids 402-532). In terms of tissue distribution, salivary gland (at protein level).

It localises to the secreted. Zn(2+) modulates binding to host coagulation factor XII (F12) and high molecular weight kininogen (KNG1). In terms of biological role, suppresses activation of the host plasma kallikrein-kinin system, leading to inhibition of the intrinsic coagulation pathway. Blocks host coagulation factor XII (F12) and prekallikrein (KLKB1) reciprocal activation without affecting their amidolytic activities. Blocks binding of host F12 and high molecular weight kininogen (KNG1) to negatively charged surfaces. Attenuates generation of bradykinin by interfering with activation of host kallikrein-kinin system. This chain is Triafestin-1, found in Triatoma infestans (Assassin bug).